An 824-amino-acid polypeptide reads, in one-letter code: Putative beta-glucuronidase (824 aa).

Residues 26-43 (YLKLVLVLYLIMVSWSGY) traverse the membrane as a helical segment. Catalysis depends on Glu-430, which acts as the Proton donor.

Belongs to the glycosyl hydrolase 2 family.

It is found in the membrane. It carries out the reaction a beta-D-glucuronoside + H2O = D-glucuronate + an alcohol. Glycoside hydrolase that may be involved in ulvan degradation. Ulvan is the main polysaccharide component of the Ulvales (green seaweed) cell wall. It is composed of disaccharide building blocks comprising 3-sulfated rhamnose (Rha3S) linked to D-glucuronic acid (GlcA), L-iduronic acid (IduA), or D-xylose (Xyl). This chain is Putative beta-glucuronidase, found in Formosa agariphila (strain DSM 15362 / KCTC 12365 / LMG 23005 / KMM 3901 / M-2Alg 35-1).